A 254-amino-acid polypeptide reads, in one-letter code: Probable protein ABIL5 (254 aa).

A disordered region spans residues 1 to 26 (MEVAEAGVDGVAGRRQQEEASGAAPF).

It belongs to the ABI family. In terms of assembly, binds SCAR.

The protein resides in the cytoplasm. It is found in the cytoskeleton. Involved in regulation of actin and microtubule organization. Part of a WAVE complex that activates the Arp2/3 complex. The protein is Probable protein ABIL5 of Oryza sativa subsp. japonica (Rice).